We begin with the raw amino-acid sequence, 138 residues long: Basic phospholipase A2 chain HDP-2P (138 aa).

The signal sequence occupies residues 1-16 (MRILWIVAVCLIGVEG). Cystine bridges form between Cys42-Cys131, Cys44-Cys60, Cys59-Cys111, Cys65-Cys138, Cys66-Cys104, Cys73-Cys97, and Cys91-Cys102. 3 residues coordinate Ca(2+): Tyr43, Gly45, and Gly47. His63 is a catalytic residue. Ca(2+) is bound at residue Asp64. The active site involves Asp105.

In terms of assembly, heterodimer of an acidic and a basic chain; non-covalently linked. The toxic basic protein has phospholipase A2 activity (chain HDP-2P) and the non-toxic acidic protein functions as its inhibitor (chain HPD-1I (AC A4VBF0)). Requires Ca(2+) as cofactor. As to expression, expressed by the venom gland.

It localises to the secreted. The catalysed reaction is a 1,2-diacyl-sn-glycero-3-phosphocholine + H2O = a 1-acyl-sn-glycero-3-phosphocholine + a fatty acid + H(+). Enzymatic activity and neurotoxicity are inhibited by Triton X-100. Triton X-100 has been determined to be located in the center of the hydrophobic channel of the enzyme. Functionally, monomer: snake venom phospholipase A2 (PLA2) that affects neuromuscular transmission presynaptically. It has catalytic activity, anticoagulant activity and weakly inhibits ADP-induced platelet aggregation. PLA2 catalyzes the calcium-dependent hydrolysis of the 2-acyl groups in 3-sn-phosphoglycerides. Its function is as follows. Heterodimer: shows the same activities as the monomer, but with a lower potency. This Vipera nikolskii (Nikolsky's adder) protein is Basic phospholipase A2 chain HDP-2P.